The sequence spans 538 residues: Protein NRT1/ PTR FAMILY 5.11 (538 aa).

The next 2 membrane-spanning stretches (helical) occupy residues phenylalanine 44–serine 64 and alanine 74–leucine 94. Threonine 99 carries the post-translational modification Phosphothreonine. The next 10 membrane-spanning stretches (helical) occupy residues isoleucine 100–isoleucine 120, threonine 134–isoleucine 154, serine 175–valine 194, tryptophan 204–leucine 224, isoleucine 308–phenylalanine 328, glycine 342–isoleucine 362, isoleucine 389–lysine 409, valine 424–glycine 444, alanine 463–isoleucine 483, and tyrosine 507–alanine 527.

It belongs to the major facilitator superfamily. Proton-dependent oligopeptide transporter (POT/PTR) (TC 2.A.17) family. As to expression, expressed in shoots and roots.

Its subcellular location is the membrane. The protein is Protein NRT1/ PTR FAMILY 5.11 (NPF5.11) of Arabidopsis thaliana (Mouse-ear cress).